We begin with the raw amino-acid sequence, 212 residues long: Probable transaldolase (212 aa).

The active-site Schiff-base intermediate with substrate is lysine 84.

The protein belongs to the transaldolase family. Type 3B subfamily.

The protein localises to the cytoplasm. It catalyses the reaction D-sedoheptulose 7-phosphate + D-glyceraldehyde 3-phosphate = D-erythrose 4-phosphate + beta-D-fructose 6-phosphate. The protein operates within carbohydrate degradation; pentose phosphate pathway; D-glyceraldehyde 3-phosphate and beta-D-fructose 6-phosphate from D-ribose 5-phosphate and D-xylulose 5-phosphate (non-oxidative stage): step 2/3. Its function is as follows. Transaldolase is important for the balance of metabolites in the pentose-phosphate pathway. The polypeptide is Probable transaldolase (Bacillus pumilus (strain SAFR-032)).